A 328-amino-acid polypeptide reads, in one-letter code: Malate dehydrogenase (328 aa).

An NAD(+)-binding site is contributed by 11-17 (GAAGQIG). Substrate-binding residues include Arg94 and Arg100. NAD(+)-binding positions include Asn107, Gln114, and 131–133 (VGN). Substrate contacts are provided by Asn133 and Arg164. The Proton acceptor role is filled by His189.

Belongs to the LDH/MDH superfamily. MDH type 2 family.

It carries out the reaction (S)-malate + NAD(+) = oxaloacetate + NADH + H(+). In terms of biological role, catalyzes the reversible oxidation of malate to oxaloacetate. In Xylella fastidiosa (strain M12), this protein is Malate dehydrogenase.